The primary structure comprises 920 residues: Periplasmic nitrate reductase (920 aa).

The segment at residues 1-29 is a signal peptide (tat-type signal); that stretch reads MNRRDFIKSTAAAAACASAGIALPANLNA. In terms of domain architecture, 4Fe-4S Mo/W bis-MGD-type spans 35–91; the sequence is WRWDKAVCRFCGTGCGIMVATKNGKIVAVKGDPEAPVNRGLNCIKGYFNAKIMYGDD. The [4Fe-4S] cluster site is built by Cys-42, Cys-45, Cys-49, and Cys-77. Mo-bis(molybdopterin guanine dinucleotide) contacts are provided by residues Lys-79, Gln-147, Asn-172, Cys-176, 209–216, Met-416, Gln-420, Asn-526, 551–552, Lys-574, Asp-601, and 810–819; these read WGANMAEM, SD, and TGRVLEHWHS. A substrate-binding site is contributed by Trp-886. Asn-894 and Lys-911 together coordinate Mo-bis(molybdopterin guanine dinucleotide).

The protein belongs to the prokaryotic molybdopterin-containing oxidoreductase family. NasA/NapA/NarB subfamily. Component of the periplasmic nitrate reductase NapAB complex composed of NapA and NapB. [4Fe-4S] cluster serves as cofactor. It depends on Mo-bis(molybdopterin guanine dinucleotide) as a cofactor. Predicted to be exported by the Tat system. The position of the signal peptide cleavage has not been experimentally proven.

It localises to the periplasm. It catalyses the reaction 2 Fe(II)-[cytochrome] + nitrate + 2 H(+) = 2 Fe(III)-[cytochrome] + nitrite + H2O. Catalytic subunit of the periplasmic nitrate reductase complex NapAB. Receives electrons from NapB and catalyzes the reduction of nitrate to nitrite. The polypeptide is Periplasmic nitrate reductase (Campylobacter hominis (strain ATCC BAA-381 / DSM 21671 / CCUG 45161 / LMG 19568 / NCTC 13146 / CH001A)).